The chain runs to 78 residues: Small ribosomal subunit protein bS18B (78 aa).

The segment at 1–22 (MPRKPVRKVASTPRPNPLDQNG) is disordered.

Belongs to the bacterial ribosomal protein bS18 family. Part of the 30S ribosomal subunit. Forms a tight heterodimer with protein bS6.

Binds as a heterodimer with protein bS6 to the central domain of the 16S rRNA, where it helps stabilize the platform of the 30S subunit. The sequence is that of Small ribosomal subunit protein bS18B from Streptomyces avermitilis (strain ATCC 31267 / DSM 46492 / JCM 5070 / NBRC 14893 / NCIMB 12804 / NRRL 8165 / MA-4680).